A 332-amino-acid chain; its full sequence is L-lactate dehydrogenase A chain (332 aa).

NAD(+)-binding positions include 29-57 (GAVGMACAISILMKDLADELALVDVVEDK) and Arg-99. Positions 106, 138, and 169 each coordinate substrate. Asn-138 lines the NAD(+) pocket. The active-site Proton acceptor is His-193. Thr-248 lines the substrate pocket.

Belongs to the LDH/MDH superfamily. LDH family. Homotetramer.

It is found in the cytoplasm. It carries out the reaction (S)-lactate + NAD(+) = pyruvate + NADH + H(+). The protein operates within fermentation; pyruvate fermentation to lactate; (S)-lactate from pyruvate: step 1/1. Interconverts simultaneously and stereospecifically pyruvate and lactate with concomitant interconversion of NADH and NAD(+). In Alligator mississippiensis (American alligator), this protein is L-lactate dehydrogenase A chain (LDHA).